The following is a 325-amino-acid chain: Aldo-keto reductase family 1 member A1 (325 aa).

Threonine 2 bears the N-acetylthreonine mark. Serine 4 carries the post-translational modification Phosphoserine. NADP(+)-binding positions include 11-20 (GQKMPLIGLG), threonine 21, and tryptophan 22. Residue serine 38 is modified to Phosphoserine. Aspartate 45 lines the NADP(+) pocket. Tyrosine 50 serves as the catalytic Proton donor. Lysine 127 bears the N6-acetyllysine; alternate mark. An N6-succinyllysine; alternate modification is found at lysine 127. At lysine 145 the chain carries N6-succinyllysine. 12 residues coordinate NADP(+): serine 162, asparagine 163, serine 211, leucine 213, serine 215, serine 216, lysine 263, serine 264, isoleucine 265, arginine 269, glutamine 272, and asparagine 273. Serine 211 bears the Phosphoserine mark.

The protein belongs to the aldo/keto reductase family. As to quaternary structure, monomer. Widely expressed.

The protein localises to the cytoplasm. It localises to the cytosol. The protein resides in the apical cell membrane. It catalyses the reaction a primary alcohol + NADP(+) = an aldehyde + NADPH + H(+). The catalysed reaction is L-gulonate + NADP(+) = aldehydo-D-glucuronate + NADPH + H(+). The enzyme catalyses L-gulono-1,4-lactone + NADP(+) = D-glucurono-3,6-lactone + NADPH + H(+). It carries out the reaction allyl alcohol + NADP(+) = acrolein + NADPH + H(+). It catalyses the reaction glycerol + NADP(+) = D-glyceraldehyde + NADPH + H(+). The catalysed reaction is glycerol + NADP(+) = L-glyceraldehyde + NADPH + H(+). The enzyme catalyses hydroxyacetone + NADP(+) = methylglyoxal + NADPH + H(+). It carries out the reaction 3-deoxyfructose + NADP(+) = 3-deoxyglucosone + NADPH + H(+). It catalyses the reaction (R)-mevalonate + NADP(+) = (R)-mevaldate + NADPH + H(+). The catalysed reaction is pyridine 3-methanol + NADP(+) = pyridine-3-carbaldehyde + NADPH + H(+). The enzyme catalyses S-nitroso-CoA + NADPH + H(+) = sulfinamide-CoA + NADP(+). It carries out the reaction S-nitrosoglutathione + NADPH + H(+) = S-(hydroxysulfenamide)glutathione + NADP(+). In terms of biological role, catalyzes the NADPH-dependent reduction of a wide variety of carbonyl-containing compounds to their corresponding alcohols. Displays enzymatic activity towards endogenous metabolites such as aromatic and aliphatic aldehydes, ketones, monosaccharides and bile acids, with a preference for negatively charged substrates, such as glucuronate and succinic semialdehyde. Plays an important role in ascorbic acid biosynthesis by catalyzing the reduction of D-glucuronic acid and D-glucurono-gamma-lactone. Functions as a detoxifiying enzyme by reducing a range of toxic aldehydes. Reduces methylglyoxal and 3-deoxyglucosone, which are present at elevated levels under hyperglycemic conditions and are cytotoxic. Involved in the detoxification of lipid-derived aldehydes like acrolein. Plays a role in the activation of procarcinogens, such as polycyclic aromatic hydrocarbon trans-dihydrodiols, and in the metabolism of various xenobiotics and drugs. Also acts as an inhibitor of protein S-nitrosylation by mediating degradation of S-nitroso-coenzyme A (S-nitroso-CoA), a cofactor required to S-nitrosylate proteins. S-nitroso-CoA reductase activity is involved in reprogramming intermediary metabolism in renal proximal tubules, notably by inhibiting protein S-nitrosylation of isoform 2 of PKM (PKM2). Also acts as a S-nitroso-glutathione reductase by catalyzing the NADPH-dependent reduction of S-nitrosoglutathione. Displays no reductase activity towards retinoids. In Mus musculus (Mouse), this protein is Aldo-keto reductase family 1 member A1.